The sequence spans 273 residues: Glutamate 5-kinase (273 aa).

Lysine 15 contacts ATP. 3 residues coordinate substrate: serine 55, aspartate 142, and asparagine 158. ATP-binding positions include 178-179 (SD) and 220-226 (TGGMLSK).

Belongs to the glutamate 5-kinase family.

The protein resides in the cytoplasm. It carries out the reaction L-glutamate + ATP = L-glutamyl 5-phosphate + ADP. The protein operates within amino-acid biosynthesis; L-proline biosynthesis; L-glutamate 5-semialdehyde from L-glutamate: step 1/2. In terms of biological role, catalyzes the transfer of a phosphate group to glutamate to form L-glutamate 5-phosphate. This Streptococcus pyogenes serotype M2 (strain MGAS10270) protein is Glutamate 5-kinase.